Consider the following 245-residue polypeptide: Bis(5'-nucleosyl)-tetraphosphatase PrpE [asymmetrical] (245 aa).

The protein belongs to the PrpE family. Requires Ni(2+) as cofactor.

The enzyme catalyses P(1),P(4)-bis(5'-guanosyl) tetraphosphate + H2O = GMP + GTP + 2 H(+). Functionally, asymmetrically hydrolyzes Ap4p to yield AMP and ATP. The polypeptide is Bis(5'-nucleosyl)-tetraphosphatase PrpE [asymmetrical] (Anoxybacillus flavithermus (strain DSM 21510 / WK1)).